We begin with the raw amino-acid sequence, 132 residues long: Small ribosomal subunit protein uS8 (132 aa).

It belongs to the universal ribosomal protein uS8 family. Part of the 30S ribosomal subunit. Contacts proteins S5 and S12.

Its function is as follows. One of the primary rRNA binding proteins, it binds directly to 16S rRNA central domain where it helps coordinate assembly of the platform of the 30S subunit. This is Small ribosomal subunit protein uS8 from Streptococcus pyogenes serotype M49 (strain NZ131).